Reading from the N-terminus, the 347-residue chain is uncharacterized protein (347 aa).

The Mn(2+) site is built by aspartate 207, aspartate 218, histidine 279, glutamate 312, and glutamate 326.

Belongs to the peptidase M24B family. Mn(2+) serves as cofactor.

This is an uncharacterized protein from Methanocaldococcus jannaschii (strain ATCC 43067 / DSM 2661 / JAL-1 / JCM 10045 / NBRC 100440) (Methanococcus jannaschii).